A 161-amino-acid polypeptide reads, in one-letter code: S-protein homolog 2 (161 aa).

The signal sequence occupies residues 1 to 24 (MDIPKQYLSLFILIIFITTKLSQA). N-linked (GlcNAc...) asparagine glycans are attached at residues Asn75, Asn106, and Asn157.

This sequence belongs to the plant self-incompatibility (S1) protein family.

It is found in the secreted. This is S-protein homolog 2 from Arabidopsis thaliana (Mouse-ear cress).